Here is a 977-residue protein sequence, read N- to C-terminus: Mineralocorticoid receptor (977 aa).

Basic and acidic residues predominate over residues 1–19; sequence METKGYHSRPEGLDMERRW. Disordered stretches follow at residues 1-37 and 231-288; these read METK…AERT and QGTP…VSSP. Positions 1–601 are modulating; the sequence is METKGYHSRP…STGSSRPSKI (601 aa). Positions 231–243 are enriched in polar residues; it reads QGTPLTCSPTVDN. Ser-250, Ser-259, Ser-283, Ser-287, and Ser-299 each carry phosphoserine. The segment covering 259–288 has biased composition (low complexity); sequence SPLSSPLSSMKSPISSPPSHCSVKSPVSSP. Disordered regions lie at residues 305–327 and 344–368; these read NSRC…SPAA and SGAS…KGAH. Zn(2+) contacts are provided by Cys-602, Cys-605, Cys-619, Cys-622, Cys-638, Cys-644, Cys-654, and Cys-657. NR C4-type zinc fingers lie at residues 602–622 and 638–662; these read CLVC…CGSC and CAGR…LQKC. Positions 602–667 form a DNA-binding region, nuclear receptor; that stretch reads CLVCGDGASG…RLQKCLQAGM (66 aa). A hinge region spans residues 668-718; it reads NLGARKSKKLGKLKGLHEEQPQQPPPPQSPEEGTTYIAPAKEPSVNTALVP. Residues 682–703 form a disordered region; the sequence is GLHEEQPQQPPPPQSPEEGTTY. The NR LBD domain occupies 719-957; the sequence is QLSSISRALT…EFPAMLVEII (239 aa). 21-hydroxyprogesterone contacts are provided by Asn-763 and Gln-769. Aldosterone is bound by residues Asn-763 and Gln-769. Progesterone is bound by residues Asn-763 and Gln-769. The interval 775–778 is important for coactivator binding; sequence KWAK. Residues Arg-810 and Thr-938 each coordinate 21-hydroxyprogesterone. Aldosterone contacts are provided by Arg-810 and Thr-938. The progesterone site is built by Arg-810 and Thr-938.

Belongs to the nuclear hormone receptor family. NR3 subfamily.

It is found in the cytoplasm. It localises to the nucleus. Functionally, receptor for both mineralocorticoids (MC) such as aldosterone and glucocorticoids (GC) such as corticosterone or cortisol. Binds to mineralocorticoid response elements (MRE) and transactivates target genes. The effect of MC is to increase ion and water transport and thus raise extracellular fluid volume and blood pressure and lower potassium levels. The sequence is that of Mineralocorticoid receptor (NR3C2) from Tupaia belangeri (Common tree shrew).